Consider the following 346-residue polypeptide: Biotin synthase (346 aa).

Positions 38 to 256 (RQVQVSTLLS…IAVARIMMPT (219 aa)) constitute a Radical SAM core domain. Residues Cys53, Cys57, and Cys60 each coordinate [4Fe-4S] cluster. [2Fe-2S] cluster is bound by residues Cys97, Cys128, Cys188, and Arg260.

Belongs to the radical SAM superfamily. Biotin synthase family. Homodimer. It depends on [4Fe-4S] cluster as a cofactor. [2Fe-2S] cluster serves as cofactor.

The catalysed reaction is (4R,5S)-dethiobiotin + (sulfur carrier)-SH + 2 reduced [2Fe-2S]-[ferredoxin] + 2 S-adenosyl-L-methionine = (sulfur carrier)-H + biotin + 2 5'-deoxyadenosine + 2 L-methionine + 2 oxidized [2Fe-2S]-[ferredoxin]. It functions in the pathway cofactor biosynthesis; biotin biosynthesis; biotin from 7,8-diaminononanoate: step 2/2. In terms of biological role, catalyzes the conversion of dethiobiotin (DTB) to biotin by the insertion of a sulfur atom into dethiobiotin via a radical-based mechanism. The chain is Biotin synthase from Shigella dysenteriae serotype 1 (strain Sd197).